Reading from the N-terminus, the 695-residue chain is Protein-glutamine gamma-glutamyltransferase 2 (695 aa).

Catalysis depends on residues C272, H332, and D355. Ca(2+) contacts are provided by N395, D397, E434, E444, and E449. GTP-binding positions include 476–482 (SIKHAQP) and 578–581 (ANIP).

Belongs to the transglutaminase superfamily. Transglutaminase family. As to quaternary structure, monomer. Ca(2+) serves as cofactor.

It localises to the cytoplasm. The protein localises to the cytosol. The protein resides in the nucleus. It is found in the chromosome. Its subcellular location is the secreted. It localises to the extracellular space. The protein localises to the extracellular matrix. The protein resides in the cell membrane. It is found in the mitochondrion. It carries out the reaction L-glutaminyl-[protein] + L-lysyl-[protein] = [protein]-L-lysyl-N(6)-5-L-glutamyl-[protein] + NH4(+). The catalysed reaction is L-glutaminyl-[protein] + serotonin = 5-serotonyl-L-glutamyl-[protein] + NH4(+). The enzyme catalyses L-glutaminyl-[protein] + dopamine = 5-dopaminyl-L-glutamyl-[protein] + NH4(+). It catalyses the reaction L-glutaminyl-[protein] + histamine = 5-histaminyl-L-glutamyl-[protein] + NH4(+). It carries out the reaction L-glutaminyl-[protein] + (R)-noradrenaline = 5-(R)-noradrenalinyl-L-glutamyl-[protein] + NH4(+). The catalysed reaction is L-glutaminyl-[protein] + H2O = L-glutamyl-[protein] + NH4(+). Its activity is regulated as follows. Acyltransferase activity is regulated by the binding of GTP and Ca(2+): inactivated by GTP, which stabilizes its closed structure, thereby obstructing the accessibility of substrates to the active sites. In contrast, Ca(2+) acts as a cofactor by inducing conformational change to the active open form. In absence of Ca(2+), Mg(2+) may bind Ca(2+)-binding sites, promoting GTP-binding and subsequent inhibition of the acyltransferase activity. Functionally, calcium-dependent acyltransferase that catalyzes the formation of covalent bonds between peptide-bound glutamine and various primary amines, such as gamma-amino group of peptide-bound lysine, or mono- and polyamines, thereby producing cross-linked or aminated proteins, respectively. Involved in many biological processes, such as bone development, angiogenesis, wound healing, cellular differentiation, chromatin modification and apoptosis. Acts as a protein-glutamine gamma-glutamyltransferase by mediating the cross-linking of proteins: under physiological conditions, the protein cross-linking activity is inhibited by GTP; inhibition is relieved by Ca(2+) in response to various stresses. When secreted, catalyzes cross-linking of proteins of the extracellular matrix, resulting in the formation of scaffolds. Plays a key role during apoptosis, both by (1) promoting the cross-linking of cytoskeletal proteins resulting in condensation of the cytoplasm, and by (2) mediating cross-linking proteins of the extracellular matrix, resulting in the irreversible formation of scaffolds that stabilize the integrity of the dying cells before their clearance by phagocytosis, thereby preventing the leakage of harmful intracellular components. In addition to protein cross-linking, can use different monoamine substrates to catalyze a vast array of protein post-translational modifications: mediates aminylation of serotonin, dopamine, noradrenaline or histamine into glutamine residues of target proteins to generate protein serotonylation, dopaminylation, noradrenalinylation or histaminylation, respectively. Mediates protein serotonylation of small GTPases during activation and aggregation of platelets, leading to constitutive activation of these GTPases. Plays a key role in chromatin organization by mediating serotonylation and dopaminylation of histone H3. Catalyzes serotonylation of 'Gln-5' of histone H3 (H3Q5ser) during serotonergic neuron differentiation, thereby facilitating transcription. Acts as a mediator of neurotransmission-independent role of nuclear dopamine in ventral tegmental area (VTA) neurons: catalyzes dopaminylation of 'Gln-5' of histone H3 (H3Q5dop), thereby regulating relapse-related transcriptional plasticity in the reward system. Also acts as a protein deamidase by mediating the side chain deamidation of specific glutamine residues of proteins to glutamate. May also act as an isopeptidase cleaving the previously formed cross-links. Also able to participate in signaling pathways independently of its acyltransferase activity: acts as a signal transducer in alpha-1 adrenergic receptor-mediated stimulation of phospholipase C-delta (PLCD) activity and is required for coupling alpha-1 adrenergic agonists to the stimulation of phosphoinositide lipid metabolism. The chain is Protein-glutamine gamma-glutamyltransferase 2 from Pagrus major (Red sea bream).